The chain runs to 146 residues: Hemoglobin subunit beta (146 aa).

The residue at position 1 (Val-1) is an N-acetylvaline. Residues 2–146 (HLTGEEKAAV…VANALAHKYH (145 aa)) enclose the Globin domain. Thr-12 bears the Phosphothreonine mark. Ser-44 bears the Phosphoserine mark. Residue Lys-59 is modified to N6-acetyllysine. His-63 contributes to the heme b binding site. Residue Lys-82 is modified to N6-acetyllysine. His-92 contributes to the heme b binding site. At Cys-93 the chain carries S-nitrosocysteine. Lys-144 is subject to N6-acetyllysine.

The protein belongs to the globin family. Heterotetramer of two alpha chains and two beta chains. Red blood cells.

Involved in oxygen transport from the lung to the various peripheral tissues. This is Hemoglobin subunit beta (HBB) from Mustela putorius furo (European domestic ferret).